Consider the following 351-residue polypeptide: Cardiolipin synthase (CMP-forming) (351 aa).

The segment at 74–120 (PAPQLSASHQHQAQQQQQQTKQPQQPYDPQQDQVPSTSTASSSKPAA) is disordered. Over residues 76–120 (PQLSASHQHQAQQQQQQTKQPQQPYDPQQDQVPSTSTASSSKPAA) the composition is skewed to low complexity. The next 5 membrane-spanning stretches (helical) occupy residues 139–159 (PLIGYWLVQGHYEAATLALAV), 191–211 (VLIGCVAAALLMNGAMPGWVA), 251–271 (AAAAGAATGAANGVASGGGGG), 280–300 (PLLISKANTVLQLLLLGGYLL), and 321–341 (LIMGLELATAATTVASGLAYG).

Belongs to the CDP-alcohol phosphatidyltransferase class-I family. Mn(2+) is required as a cofactor.

The protein resides in the mitochondrion inner membrane. It carries out the reaction a CDP-1,2-diacyl-sn-glycerol + a 1,2-diacyl-sn-glycero-3-phospho-(1'-sn-glycerol) = a cardiolipin + CMP + H(+). Functionally, catalyzes the synthesis of cardiolipin (CL) (diphosphatidylglycerol) by specifically transferring a phosphatidyl group from CDP-diacylglycerol to phosphatidylglycerol (PG). CL is a key phospholipid in mitochondrial membranes and plays important roles in maintaining the functional integrity and dynamics of mitochondria under both optimal and stress conditions. Cannot catalyze the phosphatidyl group transfer from one PG molecule to another to form CL. The sequence is that of Cardiolipin synthase (CMP-forming) from Chlamydomonas reinhardtii (Chlamydomonas smithii).